Here is a 468-residue protein sequence, read N- to C-terminus: Chromosomal replication initiator protein DnaA (468 aa).

Residues 1-84 form a domain I, interacts with DnaA modulators region; that stretch reads MSSSLWLQCL…RFEVGSRPVS (84 aa). The tract at residues 80–106 is disordered; that stretch reads SRPVSAPKPAPTRTPADVAAESSAPAQ. A domain II region spans residues 84–131; sequence SAPKPAPTRTPADVAAESSAPAQLQARKPVHKTWDDDPQAIAAINHRS. The segment at 132–348 is domain III, AAA+ region; that stretch reads NMNPKHKFDN…GALNRVIANA (217 aa). G176, G178, K179, and T180 together coordinate ATP. Residues 349 to 468 form a domain IV, binds dsDNA region; the sequence is NFTGRPITID…YSNLIRTLSS (120 aa).

This sequence belongs to the DnaA family. Oligomerizes as a right-handed, spiral filament on DNA at oriC.

The protein resides in the cytoplasm. Plays an essential role in the initiation and regulation of chromosomal replication. ATP-DnaA binds to the origin of replication (oriC) to initiate formation of the DNA replication initiation complex once per cell cycle. Binds the DnaA box (a 9 base pair repeat at the origin) and separates the double-stranded (ds)DNA. Forms a right-handed helical filament on oriC DNA; dsDNA binds to the exterior of the filament while single-stranded (ss)DNA is stabiized in the filament's interior. The ATP-DnaA-oriC complex binds and stabilizes one strand of the AT-rich DNA unwinding element (DUE), permitting loading of DNA polymerase. After initiation quickly degrades to an ADP-DnaA complex that is not apt for DNA replication. Binds acidic phospholipids. The polypeptide is Chromosomal replication initiator protein DnaA (Vibrio parahaemolyticus serotype O3:K6 (strain RIMD 2210633)).